The sequence spans 181 residues: MASSMLSSAAVVTSPAQATMVAPFTGLKSSAAFPVTRKTNKDITSIASNGGRVSCMKVWPPIGKKKFETLSYLPDLSDVELAKEVDYLLRNKWIPCVEFELEHGFVYREHGNTPGYYDGRYWTMWKLPLFGCTDSAQVLKEVEECKKEYPGAFIRIIGFDNTRQVQCISFIAYKPPSFTEA.

The N-terminal 54 residues, Met1–Ser54, are a transit peptide targeting the chloroplast.

This sequence belongs to the RuBisCO small chain family. Heterohexadecamer of 8 large and 8 small subunits.

Its subcellular location is the plastid. It localises to the chloroplast. Functionally, ruBisCO catalyzes two reactions: the carboxylation of D-ribulose 1,5-bisphosphate, the primary event in carbon dioxide fixation, as well as the oxidative fragmentation of the pentose substrate. Both reactions occur simultaneously and in competition at the same active site. Although the small subunit is not catalytic it is essential for maximal activity. This is Ribulose bisphosphate carboxylase small subunit 3B, chloroplastic (RBCS-3B) from Arabidopsis thaliana (Mouse-ear cress).